We begin with the raw amino-acid sequence, 1241 residues long: uncharacterized protein (1241 aa).

Positions isoleucine 21 to asparagine 49 form a coiled coil. 3 helical membrane passes run valine 261–glycine 281, alanine 918–alanine 938, and glycine 947–glycine 967. The interval threonine 1005 to alanine 1028 is disordered. Positions asparagine 1013–alanine 1028 are enriched in polar residues.

The protein resides in the host membrane. This is an uncharacterized protein from Diadromus pulchellus (Parasitic wasp).